The following is a 97-amino-acid chain: U-scoloptoxin(10)-Ssd2a (97 aa).

Residues 1 to 23 (MNKSMLIFFTILFLTYIIEEKEA) form the signal peptide.

In terms of processing, contains 3 disulfide bonds. As to expression, expressed by the venom gland.

Its subcellular location is the secreted. This is U-scoloptoxin(10)-Ssd2a from Scolopendra dehaani (Thai centipede).